Here is a 373-residue protein sequence, read N- to C-terminus: MALVKLQTQHFRNLLSAPVEFSPSFNLLYGANGSGKTSVLEAIGYLGLGRSFRVSRHQAVVAHGQSKLTVFGALDSGLLAQESSEKVEHRIGISRDVSLKETQLRVDGEAVRSLSFLAMHLPVSVIDPGVFDIVAGGPGKRRQFLDWLVFHVEPSFSSLWQQVQRVTSQRNQMLRNGRLDESLMRVWDSQYGALAESLSDIRETVFQRFKIAFESVLAELDAPWVEGLKMDFYPGWDRSTALTEVLVNHREQERRMGHTLYGPNRADIRLKFGGRPVAETFSRGQQKTLVILMKIAQGKVLSDLGKQVTFLLDDINAELDVRHRVMLARNLQELRCQVFITSIEHPEPDTLWHDGDTPEYRMFHVEHGQLTEE.

An ATP-binding site is contributed by 30-37 (GANGSGKT).

The protein belongs to the RecF family.

It is found in the cytoplasm. In terms of biological role, the RecF protein is involved in DNA metabolism; it is required for DNA replication and normal SOS inducibility. RecF binds preferentially to single-stranded, linear DNA. It also seems to bind ATP. The chain is DNA replication and repair protein RecF from Marinobacter nauticus (strain ATCC 700491 / DSM 11845 / VT8) (Marinobacter aquaeolei).